The primary structure comprises 165 residues: MTTRSTDQTEHLRALGQKTPYPAAGPSTDLLEAFPNRFPDRPYIVSIAFPEFTSLCPVTGQPDFATIVVEYIPDQFCVESKSFKVYMFAFRDHQSFMETITNTILDDMTTKLQPLWCRVKGLFTPRGGTQLHVFAERFKEVEPARAQALRDMVSEWKRENNRHGA.

Residues 1-24 (MTTRSTDQTEHLRALGQKTPYPAA) are disordered. The Thioimide intermediate role is filled by Cys-56. The Proton donor role is filled by Asp-63. Residues 78–80 (VES) and 97–98 (ME) each bind substrate.

Belongs to the GTP cyclohydrolase I family. QueF type 1 subfamily.

The protein resides in the cytoplasm. It catalyses the reaction 7-aminomethyl-7-carbaguanine + 2 NADP(+) = 7-cyano-7-deazaguanine + 2 NADPH + 3 H(+). The protein operates within tRNA modification; tRNA-queuosine biosynthesis. Catalyzes the NADPH-dependent reduction of 7-cyano-7-deazaguanine (preQ0) to 7-aminomethyl-7-deazaguanine (preQ1). This chain is NADPH-dependent 7-cyano-7-deazaguanine reductase, found in Nitratidesulfovibrio vulgaris (strain ATCC 29579 / DSM 644 / CCUG 34227 / NCIMB 8303 / VKM B-1760 / Hildenborough) (Desulfovibrio vulgaris).